The chain runs to 336 residues: tRNA pseudouridine synthase D (336 aa).

Aspartate 84 serves as the catalytic Nucleophile. Residues 164–298 (GVPNYFGEQR…TPSYRWLVGD (135 aa)) form the TRUD domain.

It belongs to the pseudouridine synthase TruD family.

The enzyme catalyses uridine(13) in tRNA = pseudouridine(13) in tRNA. Functionally, responsible for synthesis of pseudouridine from uracil-13 in transfer RNAs. In Cellvibrio japonicus (strain Ueda107) (Pseudomonas fluorescens subsp. cellulosa), this protein is tRNA pseudouridine synthase D.